The primary structure comprises 62 residues: Sec-independent protein translocase protein TatA (62 aa).

Residues 10-32 (LLIILIIVIAIFGAGKLAGLGGA) traverse the membrane as a helical segment.

The protein belongs to the TatA/E family. In terms of assembly, forms a complex with TatC.

It localises to the cell membrane. Part of the twin-arginine translocation (Tat) system that transports large folded proteins containing a characteristic twin-arginine motif in their signal peptide across membranes. TatA could form the protein-conducting channel of the Tat system. This chain is Sec-independent protein translocase protein TatA, found in Chloroflexus aurantiacus (strain ATCC 29366 / DSM 635 / J-10-fl).